A 161-amino-acid chain; its full sequence is PTS system glucose-specific EIIA component (161 aa).

The PTS EIIA type-1 domain occupies 31–135 (DPVFSKKIVG…SILTPVVISN (105 aa)). Zn(2+) contacts are provided by histidine 68 and histidine 83. The Tele-phosphohistidine intermediate; for EIIA activity role is filled by histidine 83. Position 83 is a phosphohistidine; by HPr (histidine 83).

The cofactor is Zn(2+).

It localises to the cytoplasm. Its function is as follows. The phosphoenolpyruvate-dependent sugar phosphotransferase system (sugar PTS), a major carbohydrate active transport system, catalyzes the phosphorylation of incoming sugar substrates concomitantly with their translocation across the cell membrane. The enzyme II complex composed of PtsG and Crr is involved in glucose transport. The chain is PTS system glucose-specific EIIA component (crr) from Buchnera aphidicola subsp. Acyrthosiphon pisum (strain APS) (Acyrthosiphon pisum symbiotic bacterium).